Reading from the N-terminus, the 453-residue chain is Obtusifoliol 14-alpha demethylase (453 aa).

A heme-binding site is contributed by C395.

The protein belongs to the cytochrome P450 family. Requires heme as cofactor.

It is found in the membrane. It catalyses the reaction a 14alpha-methyl steroid + 3 reduced [NADPH--hemoprotein reductase] + 3 O2 = a Delta(14) steroid + formate + 3 oxidized [NADPH--hemoprotein reductase] + 4 H2O + 4 H(+). It participates in steroid biosynthesis; zymosterol biosynthesis; zymosterol from lanosterol: step 1/6. Its function is as follows. Catalyzes the 14-alpha demethylation of obtusifoliol to 4 alpha-methyl-5 alpha-ergosta-8,14,24(28)-trien-3 beta-ol. This chain is Obtusifoliol 14-alpha demethylase (CYP51), found in Triticum aestivum (Wheat).